A 206-amino-acid chain; its full sequence is Large ribosomal subunit protein uL4 (206 aa).

Positions 44–87 are disordered; the sequence is NRQGTQSAKTRSEVSGGGRKPWRQKGTGHARQGSTRSPQWTGGG.

This sequence belongs to the universal ribosomal protein uL4 family. Part of the 50S ribosomal subunit.

Its function is as follows. One of the primary rRNA binding proteins, this protein initially binds near the 5'-end of the 23S rRNA. It is important during the early stages of 50S assembly. It makes multiple contacts with different domains of the 23S rRNA in the assembled 50S subunit and ribosome. In terms of biological role, forms part of the polypeptide exit tunnel. The polypeptide is Large ribosomal subunit protein uL4 (Lachnospira eligens (strain ATCC 27750 / DSM 3376 / VPI C15-48 / C15-B4) (Eubacterium eligens)).